The primary structure comprises 123 residues: Large ribosomal subunit protein uL14 (123 aa).

The protein belongs to the universal ribosomal protein uL14 family. As to quaternary structure, part of the 50S ribosomal subunit. Forms a cluster with proteins L3 and L19. In the 70S ribosome, L14 and L19 interact and together make contacts with the 16S rRNA in bridges B5 and B8.

In terms of biological role, binds to 23S rRNA. Forms part of two intersubunit bridges in the 70S ribosome. The polypeptide is Large ribosomal subunit protein uL14 (Buchnera aphidicola subsp. Acyrthosiphon kondoi (Acyrthosiphon kondoi symbiotic bacterium)).